Here is a 567-residue protein sequence, read N- to C-terminus: WD repeat-containing protein 20 (567 aa).

Ala2 carries the N-acetylalanine modification. WD repeat units lie at residues 147 to 187 (IDKS…GTTA), 216 to 257 (VGEG…GTMK), 258 to 297 (SYFG…VIAR), and 345 to 389 (STQS…LFPH). 2 positions are modified to phosphoserine: Ser355 and Ser358. Residues 408-441 (PAGSNGSAVTTPGNSVPPPLPRSNSLPHSAVSNA) are disordered. Composition is skewed to polar residues over residues 411 to 421 (SNGSAVTTPGN) and 429 to 441 (RSNS…VSNA). Residues Ser430, Ser432, and Ser463 each carry the phosphoserine modification. The segment covering 468-481 (KERHHEKDRKRNHS) has biased composition (basic residues). The interval 468–493 (KERHHEKDRKRNHSMGHISSKSSDKL) is disordered. The stretch at 529 to 566 (IAHERLTVLVFLEDCIVTACQEGFICTWARPGKVSKFQ) is one WD 5 repeat.

As to quaternary structure, interacts with USP12; promotes translocation of USP12/WDR20 to the plasma membrane. Component of the USP12/WDR20/WDR48 deubiquitinating complex. Interacts with USP46; contributes to the cytoplasmic localization of the USP46/WDR20 complex. Component of the USP12/DMWD/WDR48 deubiquitinating complex.

The protein localises to the cytoplasm. The protein resides in the nucleus. In terms of biological role, regulator of deubiquitinating complexes. Activates deubiquitinating activity of complexes containing USP12. Anchors at the base of the ubiquitin-contacting loop of USP12 and remotely modulates the catalytic center of the enzyme. Regulates shuttling of complexes containing USP12 between the plasma membrane, cytoplasm and nucleus. The sequence is that of WD repeat-containing protein 20 (Wdr20) from Mus musculus (Mouse).